A 272-amino-acid chain; its full sequence is Indole-3-glycerol phosphate synthase (272 aa).

This sequence belongs to the TrpC family.

The catalysed reaction is 1-(2-carboxyphenylamino)-1-deoxy-D-ribulose 5-phosphate + H(+) = (1S,2R)-1-C-(indol-3-yl)glycerol 3-phosphate + CO2 + H2O. Its pathway is amino-acid biosynthesis; L-tryptophan biosynthesis; L-tryptophan from chorismate: step 4/5. The chain is Indole-3-glycerol phosphate synthase from Mycobacterium tuberculosis (strain ATCC 25177 / H37Ra).